The primary structure comprises 290 residues: Sodium/potassium-transporting ATPase subunit beta-2 (290 aa).

Over 1 to 39 the chain is Cytoplasmic; sequence MVIQKEKKSCGQVVEEWKEFVWNPRTHQFMGRTGTSWAF. Residues 40-67 traverse the membrane as a helical; Signal-anchor for type II membrane protein segment; that stretch reads ILLFYLVFYGFLTAMFTLTMWVMLQTVS. The Extracellular segment spans residues 68–290; the sequence is DHTPKYQDRL…VAFKLRINKA (223 aa). 2 N-linked (GlcNAc...) asparagine glycosylation sites follow: asparagine 96 and asparagine 118. An intrachain disulfide couples cysteine 129 to cysteine 150. Asparagine 153 and asparagine 159 each carry an N-linked (GlcNAc...) asparagine glycan. Cysteine 160 and cysteine 177 are disulfide-bonded. 3 N-linked (GlcNAc...) asparagine glycosylation sites follow: asparagine 193, asparagine 197, and asparagine 238. Residues 193–290 are immunoglobulin-like; sequence NQSMNVTCVG…VAFKLRINKA (98 aa). Cysteine 200 and cysteine 261 are joined by a disulfide.

Belongs to the X(+)/potassium ATPases subunit beta family. The sodium/potassium-transporting ATPase is composed of a catalytic alpha subunit, an auxiliary non-catalytic beta subunit and an additional regulatory subunit. Interacts with isoform 2 of BSG. In terms of tissue distribution, highly expressed in brain (at protein level).

It is found in the cell membrane. Its function is as follows. This is the non-catalytic component of the active enzyme, which catalyzes the hydrolysis of ATP coupled with the exchange of Na(+) and K(+) ions across the plasma membrane. The exact function of the beta-2 subunit is not known. Mediates cell adhesion of neurons and astrocytes, and promotes neurite outgrowth. The protein is Sodium/potassium-transporting ATPase subunit beta-2 (Atp1b2) of Rattus norvegicus (Rat).